The following is a 610-amino-acid chain: Methionine--tRNA ligase (610 aa).

A 'HIGH' region motif is present at residues 12 to 22 (PYANGPRHIGH). Residues C144, C147, C157, and C160 each coordinate Zn(2+). The 'KMSKS' region motif lies at 348–352 (KFSSS). S351 lines the ATP pocket.

Belongs to the class-I aminoacyl-tRNA synthetase family. MetG type 1 subfamily. Monomer. Zn(2+) is required as a cofactor.

The protein resides in the cytoplasm. It carries out the reaction tRNA(Met) + L-methionine + ATP = L-methionyl-tRNA(Met) + AMP + diphosphate. Is required not only for elongation of protein synthesis but also for the initiation of all mRNA translation through initiator tRNA(fMet) aminoacylation. The sequence is that of Methionine--tRNA ligase from Corynebacterium diphtheriae (strain ATCC 700971 / NCTC 13129 / Biotype gravis).